The following is a 691-amino-acid chain: Elongation factor G (691 aa).

The tr-type G domain occupies 8–283 (EDYRNFGIMA…AVVDYLPSPV (276 aa)). GTP is bound by residues 17–24 (AHIDAGKT), 81–85 (DTPGH), and 135–138 (NKMD).

The protein belongs to the TRAFAC class translation factor GTPase superfamily. Classic translation factor GTPase family. EF-G/EF-2 subfamily.

It localises to the cytoplasm. Functionally, catalyzes the GTP-dependent ribosomal translocation step during translation elongation. During this step, the ribosome changes from the pre-translocational (PRE) to the post-translocational (POST) state as the newly formed A-site-bound peptidyl-tRNA and P-site-bound deacylated tRNA move to the P and E sites, respectively. Catalyzes the coordinated movement of the two tRNA molecules, the mRNA and conformational changes in the ribosome. The polypeptide is Elongation factor G (Methylorubrum populi (strain ATCC BAA-705 / NCIMB 13946 / BJ001) (Methylobacterium populi)).